A 264-amino-acid polypeptide reads, in one-letter code: uncharacterized protein (264 aa).

Residues 7 to 27 form a helical membrane-spanning segment; sequence LTLGICLVLLIILIVGYVIMT.

Belongs to the staphylococcal tandem lipoprotein family.

Its subcellular location is the cell membrane. This is an uncharacterized protein from Staphylococcus aureus (strain MW2).